Here is a 209-residue protein sequence, read N- to C-terminus: MLLCDIGNSNANFLDDNKYFTLSIDQFLEFKNEQKIFYINVNEHLKEHLKNQKKFINLEPYFLFDTIYQGLGIDRIAACYTIEDGVVVDAGSAITIDIISNSIHLGGFILPGIANYKKIYSHISPRLKSEFNTQVSLDAFPQKTMDALSYGVFKGIYLLIKDAAQNKKLYFTGGDGQFLANYFDHAIYDKLLIFRGMKKIIKENPNLLY.

An ATP-binding site is contributed by 5 to 12 (DIGNSNAN). Substrate is bound by residues Tyr68 and 72–75 (GIDR). The active-site Proton acceptor is the Asp74. Asp89 lines the K(+) pocket. Ser92 contributes to the ATP binding site. A substrate-binding site is contributed by Thr144.

It belongs to the type III pantothenate kinase family. As to quaternary structure, homodimer. The cofactor is NH4(+). K(+) is required as a cofactor.

It localises to the cytoplasm. It carries out the reaction (R)-pantothenate + ATP = (R)-4'-phosphopantothenate + ADP + H(+). It functions in the pathway cofactor biosynthesis; coenzyme A biosynthesis; CoA from (R)-pantothenate: step 1/5. In terms of biological role, catalyzes the phosphorylation of pantothenate (Pan), the first step in CoA biosynthesis. This chain is Type III pantothenate kinase, found in Campylobacter jejuni (strain RM1221).